Here is a 369-residue protein sequence, read N- to C-terminus: MANPSLLILAGDGIGPEVMAEVKRIIGWFGEKRGVSFDVSEDLVGGAAYDAHGTPLADETMARAQEVDAVLLGAVGGPKYDVLDFSVKPERGLLRLRKEMDLYANLRPAQCFDALADFSSLKRDIVAGLDIMIVRELTSGVYFGEPRGIFPDNEGGRFGVNTQRYTTEEIRRVARSAFELARRRNNRVCSMEKANVMESGILWREEVQWVHDNEYPDVELSHMYADNGAMQLVRWPRQFDVIVTDNLFGDILSDCAAMLTGSLGMLPSASLGAPMANGRPKALYEPVHGSAPDIAGQGKANPIACILSFAMALRYSFDMGEEATRLEKAVETVLADGVRTADLMGPEGGTPVSTSGMGDAVLAALDASL.

An NAD(+)-binding site is contributed by 77–90; it reads GPKYDVLDFSVKPE. Substrate is bound by residues arginine 97, arginine 107, arginine 135, and aspartate 226. Mg(2+) contacts are provided by aspartate 226, aspartate 250, and aspartate 254. 289-301 lines the NAD(+) pocket; the sequence is GSAPDIAGQGKAN.

The protein belongs to the isocitrate and isopropylmalate dehydrogenases family. LeuB type 1 subfamily. Homodimer. Requires Mg(2+) as cofactor. Mn(2+) is required as a cofactor.

Its subcellular location is the cytoplasm. It carries out the reaction (2R,3S)-3-isopropylmalate + NAD(+) = 4-methyl-2-oxopentanoate + CO2 + NADH. Its pathway is amino-acid biosynthesis; L-leucine biosynthesis; L-leucine from 3-methyl-2-oxobutanoate: step 3/4. Functionally, catalyzes the oxidation of 3-carboxy-2-hydroxy-4-methylpentanoate (3-isopropylmalate) to 3-carboxy-4-methyl-2-oxopentanoate. The product decarboxylates to 4-methyl-2 oxopentanoate. The polypeptide is 3-isopropylmalate dehydrogenase (Cereibacter sphaeroides (strain ATCC 17023 / DSM 158 / JCM 6121 / CCUG 31486 / LMG 2827 / NBRC 12203 / NCIMB 8253 / ATH 2.4.1.) (Rhodobacter sphaeroides)).